The chain runs to 115 residues: Large ribosomal subunit protein bL19 (115 aa).

This sequence belongs to the bacterial ribosomal protein bL19 family.

This protein is located at the 30S-50S ribosomal subunit interface and may play a role in the structure and function of the aminoacyl-tRNA binding site. In Streptococcus pyogenes serotype M2 (strain MGAS10270), this protein is Large ribosomal subunit protein bL19.